The following is a 501-amino-acid chain: Dipeptide and tripeptide permease A (501 aa).

The Cytoplasmic portion of the chain corresponds to Met1–Arg34. A helical membrane pass occupies residues Phe35–Ser55. Topologically, residues Glu56–Ser59 are periplasmic. A helical transmembrane segment spans residues Ile60–Leu80. At Gly81–Arg89 the chain is on the cytoplasmic side. The chain crosses the membrane as a helical span at residues Val90–His110. A topological domain (periplasmic) is located at residue Asp111. The chain crosses the membrane as a helical span at residues Val112–Asn132. Over Pro133 to Thr153 the chain is Cytoplasmic. The helical transmembrane segment at Met154–Ala174 threads the bilayer. Over Ala175–Gly178 the chain is Periplasmic. Residues Trp179–Phe199 form a helical membrane-spanning segment. Topologically, residues Cys200–His217 are cytoplasmic. A helical membrane pass occupies residues Phe218–Leu238. Residues Leu239 to Arg246 are Periplasmic-facing. A helical membrane pass occupies residues Met247 to Met267. The Cytoplasmic segment spans residues Gln268–Lys274. A helical transmembrane segment spans residues Met275–Met295. At Pro296–Gln320 the chain is on the periplasmic side. A helical membrane pass occupies residues Tyr321–Asn341. At Lys342–Lys352 the chain is on the cytoplasmic side. A helical transmembrane segment spans residues Phe353–Phe373. Residues Ala374–Asn383 are Periplasmic-facing. Residues Trp384–Leu404 form a helical membrane-spanning segment. Residues Ala405–Arg414 are Cytoplasmic-facing. The helical transmembrane segment at Leu415–Gly435 threads the bilayer. Topologically, residues Tyr436–Arg459 are periplasmic. Residues Val460 to Pro480 form a helical membrane-spanning segment. Residues Lys481 to Ala501 lie on the Cytoplasmic side of the membrane.

It belongs to the major facilitator superfamily. Proton-dependent oligopeptide transporter (POT/PTR) (TC 2.A.17) family. DtpA subfamily.

The protein localises to the cell inner membrane. Proton-dependent permease that transports di- and tripeptides. The chain is Dipeptide and tripeptide permease A from Citrobacter koseri (strain ATCC BAA-895 / CDC 4225-83 / SGSC4696).